The sequence spans 570 residues: Sulfite reductase [NADPH] hemoprotein beta-component (570 aa).

[4Fe-4S] cluster-binding residues include C434, C440, C479, and C483. Residue C483 coordinates siroheme.

This sequence belongs to the nitrite and sulfite reductase 4Fe-4S domain family. As to quaternary structure, alpha(8)-beta(8). The alpha component is a flavoprotein, the beta component is a hemoprotein. Requires siroheme as cofactor. [4Fe-4S] cluster is required as a cofactor.

It catalyses the reaction hydrogen sulfide + 3 NADP(+) + 3 H2O = sulfite + 3 NADPH + 4 H(+). Its pathway is sulfur metabolism; hydrogen sulfide biosynthesis; hydrogen sulfide from sulfite (NADPH route): step 1/1. Its function is as follows. Component of the sulfite reductase complex that catalyzes the 6-electron reduction of sulfite to sulfide. This is one of several activities required for the biosynthesis of L-cysteine from sulfate. This Escherichia coli O1:K1 / APEC protein is Sulfite reductase [NADPH] hemoprotein beta-component.